The sequence spans 494 residues: 3-octaprenyl-4-hydroxybenzoate carboxy-lyase (494 aa).

Asparagine 172 serves as a coordination point for Mn(2+). Residues 175–177, 189–191, and 194–195 each bind prenylated FMN; these read IYR, RWL, and RG. A Mn(2+)-binding site is contributed by glutamate 238. Aspartate 294 (proton donor) is an active-site residue.

The protein belongs to the UbiD family. Homohexamer. The cofactor is prenylated FMN. Requires Mn(2+) as cofactor.

It localises to the cell membrane. The catalysed reaction is a 4-hydroxy-3-(all-trans-polyprenyl)benzoate + H(+) = a 2-(all-trans-polyprenyl)phenol + CO2. It participates in cofactor biosynthesis; ubiquinone biosynthesis. Catalyzes the decarboxylation of 3-octaprenyl-4-hydroxy benzoate to 2-octaprenylphenol, an intermediate step in ubiquinone biosynthesis. This chain is 3-octaprenyl-4-hydroxybenzoate carboxy-lyase, found in Herminiimonas arsenicoxydans.